The following is a 183-amino-acid chain: Peptidyl-tRNA hydrolase (183 aa).

A tRNA-binding site is contributed by Tyr-14. The active-site Proton acceptor is the His-19. TRNA-binding residues include Phe-64 and Asn-66.

This sequence belongs to the PTH family. In terms of assembly, monomer.

It localises to the cytoplasm. The catalysed reaction is an N-acyl-L-alpha-aminoacyl-tRNA + H2O = an N-acyl-L-amino acid + a tRNA + H(+). Functionally, hydrolyzes ribosome-free peptidyl-tRNAs (with 1 or more amino acids incorporated), which drop off the ribosome during protein synthesis, or as a result of ribosome stalling. In terms of biological role, catalyzes the release of premature peptidyl moieties from peptidyl-tRNA molecules trapped in stalled 50S ribosomal subunits, and thus maintains levels of free tRNAs and 50S ribosomes. This Syntrophomonas wolfei subsp. wolfei (strain DSM 2245B / Goettingen) protein is Peptidyl-tRNA hydrolase.